Reading from the N-terminus, the 95-residue chain is Aspartyl/glutamyl-tRNA(Asn/Gln) amidotransferase subunit C (95 aa).

It belongs to the GatC family. As to quaternary structure, heterotrimer of A, B and C subunits.

The enzyme catalyses L-glutamyl-tRNA(Gln) + L-glutamine + ATP + H2O = L-glutaminyl-tRNA(Gln) + L-glutamate + ADP + phosphate + H(+). It carries out the reaction L-aspartyl-tRNA(Asn) + L-glutamine + ATP + H2O = L-asparaginyl-tRNA(Asn) + L-glutamate + ADP + phosphate + 2 H(+). Functionally, allows the formation of correctly charged Asn-tRNA(Asn) or Gln-tRNA(Gln) through the transamidation of misacylated Asp-tRNA(Asn) or Glu-tRNA(Gln) in organisms which lack either or both of asparaginyl-tRNA or glutaminyl-tRNA synthetases. The reaction takes place in the presence of glutamine and ATP through an activated phospho-Asp-tRNA(Asn) or phospho-Glu-tRNA(Gln). This chain is Aspartyl/glutamyl-tRNA(Asn/Gln) amidotransferase subunit C, found in Methylocella silvestris (strain DSM 15510 / CIP 108128 / LMG 27833 / NCIMB 13906 / BL2).